Here is a 358-residue protein sequence, read N- to C-terminus: DNA polymerase IV (358 aa).

The region spanning Ile-4–Gly-185 is the UmuC domain. The Mg(2+) site is built by Asp-8 and Asp-103. Residue Glu-104 is part of the active site.

It belongs to the DNA polymerase type-Y family. As to quaternary structure, monomer. Mg(2+) serves as cofactor.

The protein resides in the cytoplasm. The enzyme catalyses DNA(n) + a 2'-deoxyribonucleoside 5'-triphosphate = DNA(n+1) + diphosphate. Functionally, poorly processive, error-prone DNA polymerase involved in untargeted mutagenesis. Copies undamaged DNA at stalled replication forks, which arise in vivo from mismatched or misaligned primer ends. These misaligned primers can be extended by PolIV. Exhibits no 3'-5' exonuclease (proofreading) activity. May be involved in translesional synthesis, in conjunction with the beta clamp from PolIII. This Shewanella baltica (strain OS195) protein is DNA polymerase IV.